Reading from the N-terminus, the 505-residue chain is Prenylcysteine oxidase 1 (505 aa).

The first 28 residues, 1-28 (MGRFAAALVGSLFWLGLLLCGLGSLASA), serve as a signal peptide directing secretion. N196, N323, and N353 each carry an N-linked (GlcNAc...) asparagine glycan.

The protein belongs to the prenylcysteine oxidase family. Requires FAD as cofactor. As to expression, highly expressed in the liver, kidney, heart and brain.

Its subcellular location is the lysosome. The enzyme catalyses an S-polyprenyl-L-cysteine + O2 + H2O = a polyprenal + L-cysteine + H2O2. It carries out the reaction S-(2E,6E)-farnesyl-L-cysteine + O2 + H2O = (2E,6E)-farnesal + L-cysteine + H2O2. It catalyses the reaction [(2E,6E,10E)-geranylgeranyl]-L-cysteine + O2 + H2O = (2E,6E,10E)-geranylgeranial + L-cysteine + H2O2. Its function is as follows. Prenylcysteine oxidase that cleaves the thioether bond of prenyl-L-cysteines, such as farnesylcysteine and geranylgeranylcysteine. Only active against free prenylcysteines and not prenylcysteine residues within prenylated proteins or peptides. Involved in the final step in the degradation of prenylated proteins, by degrading prenylcysteines after the protein has been degraded. This is Prenylcysteine oxidase 1 from Mus musculus (Mouse).